We begin with the raw amino-acid sequence, 323 residues long: Oligopeptide transport ATP-binding protein OppD (323 aa).

The ABC transporter domain maps to leucine 5–methionine 254. Glycine 41 to serine 48 provides a ligand contact to ATP.

The protein belongs to the ABC transporter superfamily. In terms of assembly, the complex is composed of two ATP-binding proteins (OppD and OppF), two transmembrane proteins (OppB and OppC) and a solute-binding protein (OppA or MppA).

It localises to the cell inner membrane. It catalyses the reaction a [peptide](out) + ATP + H2O = a [peptide](in) + ADP + phosphate + H(+). Its function is as follows. Part of the ABC transporter complex OppABCDF involved in the uptake of oligopeptides. Probably responsible for energy coupling to the transport system. This chain is Oligopeptide transport ATP-binding protein OppD (oppD), found in Haemophilus influenzae (strain ATCC 51907 / DSM 11121 / KW20 / Rd).